Consider the following 544-residue polypeptide: T-complex protein 1 subunit gamma (544 aa).

A disulfide bridge connects residues Cys-368 and Cys-374. Residues 525 to 544 (SKKRGGNEPTNPAAMAQGQE) form a disordered region.

It belongs to the TCP-1 chaperonin family. Heterooligomeric complex of about 850 to 900 kDa that forms two stacked rings, 12 to 16 nm in diameter.

It is found in the cytoplasm. Functionally, molecular chaperone; assists the folding of proteins upon ATP hydrolysis. Known to play a role, in vitro, in the folding of actin and tubulin. The protein is T-complex protein 1 subunit gamma of Drosophila melanogaster (Fruit fly).